Here is a 124-residue protein sequence, read N- to C-terminus: RNA polymerase-binding protein RbpA (124 aa).

The Zn(2+) site is built by Cys-34, His-38, Cys-56, and Cys-59. The segment at 73–124 (EKKAKPARTHWDMLMERRTREELEEVLEERLAVLRSGAMNIAVHPRDSRKSA) is sufficient for interaction with HrdB (SigA).

This sequence belongs to the RNA polymerase-binding protein RbpA family. Homodimer. Forms a complex with the RNAP, and a complex with RNAP plus principal sigma factor HrdB associated with promoter. Binds to free principal sigma factors HrdB and HrdA, probably via the sigma-2 domain, but not to 6 other sigma factors tested. The cofactor is Zn(2+).

Binds to RNA polymerase (RNAP), stimulating transcription from principal, but not alternative sigma factor promoters. Stimulates transcription from several principal sigma factor HrdB (SigA)-dependent promoters but not from a SigR-dependent promoter. Stimulation occurs in the presence of the transcription initiation inhibitor rifampicin (Rif). The polypeptide is RNA polymerase-binding protein RbpA (Streptomyces coelicolor (strain ATCC BAA-471 / A3(2) / M145)).